Here is a 75-residue protein sequence, read N- to C-terminus: uncharacterized protein (75 aa).

The chain crosses the membrane as a helical span at residues alanine 7–glycine 26.

The protein localises to the membrane. This is an uncharacterized protein from Dictyostelium discoideum (Social amoeba).